The following is a 204-amino-acid chain: Large ribosomal subunit protein uL4 (204 aa).

The span at 42 to 55 (GSRQGSKAQKNRSA) shows a compositional bias: polar residues. The interval 42–85 (GSRQGSKAQKNRSAVSGGGKRPWAQKGTGRARAGTTRGPIWRSG) is disordered. Over residues 68 to 79 (GTGRARAGTTRG) the composition is skewed to low complexity.

This sequence belongs to the universal ribosomal protein uL4 family. As to quaternary structure, part of the 50S ribosomal subunit.

One of the primary rRNA binding proteins, this protein initially binds near the 5'-end of the 23S rRNA. It is important during the early stages of 50S assembly. It makes multiple contacts with different domains of the 23S rRNA in the assembled 50S subunit and ribosome. Functionally, forms part of the polypeptide exit tunnel. In Vesicomyosocius okutanii subsp. Calyptogena okutanii (strain HA), this protein is Large ribosomal subunit protein uL4.